The following is a 245-amino-acid chain: MSGHSKWHNIQGRKNAQDAKRGKIFQKISRDLYQAAKAGGPDPDGNPQLRLEMDKARAANMPKENIKRALDKASGVGGAKFEEITYEGYGPAGTAIMVAALTDNKNRTAAAIRSAFTHHGGSLGAAGSVSYMFDRKGYIVILREDLDTDEDTMLMDALDAGADDMETTDDAFKIYTDPSSVTAVRDALQEKGYSLDTAEARMFPQNTTEVPEAKASQYQGLIDELEDNDDVSDIYEAAVLPEGVE.

The tract at residues 1–23 is disordered; the sequence is MSGHSKWHNIQGRKNAQDAKRGK.

It belongs to the TACO1 family.

The protein resides in the cytoplasm. The polypeptide is Probable transcriptional regulatory protein LVIS_1199 (Levilactobacillus brevis (strain ATCC 367 / BCRC 12310 / CIP 105137 / JCM 1170 / LMG 11437 / NCIMB 947 / NCTC 947) (Lactobacillus brevis)).